The chain runs to 210 residues: Protein GET1 (210 aa).

The Lumenal portion of the chain corresponds to 1–4 (MPSL). A helical transmembrane segment spans residues 5–24 (LIIVLIIHVVTYLINTIGAN). The Cytoplasmic segment spans residues 25–110 (TIDSLLWLLY…SFDLAVKSIR (86 aa)). A coiled-coil region spans residues 39–95 (NQTSQTANEQRRLKREVMQLKREMNATSSQDEFAKWAKLRRRHDKTMEEYEAKNKAL). A helical membrane pass occupies residues 111–131 (FFSTTGLKLFLQFWCSKTPIF). At 132–155 (ELPRGWIPWQVEWVLSFPRAPLGT) the chain is on the lumenal side. Residues 156-172 (VSIQIWGGVCATVVSLA) form a helical membrane-spanning segment. The Cytoplasmic portion of the chain corresponds to 173 to 210 (GDAIGVVNVYLTSKAPKQKEPATSGENSARPMAIKKEL). Positions 189–210 (KQKEPATSGENSARPMAIKKEL) are disordered.

Belongs to the WRB/GET1 family. As to quaternary structure, interacts with GET3.

The protein localises to the endoplasmic reticulum membrane. Required for the post-translational delivery of tail-anchored (TA) proteins to the endoplasmic reticulum. Acts as a membrane receptor for soluble GET3, which recognizes and selectively binds the transmembrane domain of TA proteins in the cytosol. The polypeptide is Protein GET1 (Coccidioides immitis (strain RS) (Valley fever fungus)).